The following is a 488-amino-acid chain: Glutamate--tRNA ligase (488 aa).

A 'HIGH' region motif is present at residues Pro11–Asn21. Cys108, Cys110, Cys135, and Asp137 together coordinate Zn(2+). A 'KMSKS' region motif is present at residues Lys252–Arg256. Residue Lys255 coordinates ATP.

This sequence belongs to the class-I aminoacyl-tRNA synthetase family. Glutamate--tRNA ligase type 1 subfamily. In terms of assembly, monomer. Zn(2+) is required as a cofactor.

It is found in the cytoplasm. The catalysed reaction is tRNA(Glu) + L-glutamate + ATP = L-glutamyl-tRNA(Glu) + AMP + diphosphate. Its function is as follows. Catalyzes the attachment of glutamate to tRNA(Glu) in a two-step reaction: glutamate is first activated by ATP to form Glu-AMP and then transferred to the acceptor end of tRNA(Glu). The polypeptide is Glutamate--tRNA ligase (Natranaerobius thermophilus (strain ATCC BAA-1301 / DSM 18059 / JW/NM-WN-LF)).